A 369-amino-acid chain; its full sequence is MSARILEDSPNARINKTILDRYLSLPLQENIVQATYVWIDGTGEDLRCKDRTLDFIPQSPKELPVWNYDGSSCYQAEGSNSDTYLYPVAIYKDPFRRGNNILVMCDTYKFDGTPTDTNKRKTCLEVANKCAAEEPWFGIEQEYTFLDFDGHPLGWPKNGFPGPQGPYYCGVGANKVYARDIVDAHYRACLYAGIKVSGTNAEVMPAQWEFQVGPCEGISIGDDLWMARFLLHRISEEFGIVSTLDPKPMPGDWNGAGAHTNVSTKAMREDGGIRDIEKAVAKLSKCHERHIRAYDPKQGQDNARRLTGKHETSSINDFSAGVANRGCSIRIPRGVNDDGKGYFEDRRPSSNCDPYSVVEAILRTICLDE.

A GS beta-grasp domain is found at valine 32 to glycine 112. A GS catalytic domain is found at lysine 119 to glutamate 369.

Belongs to the glutamine synthetase family. Homooctamer.

It is found in the cytoplasm. The enzyme catalyses L-glutamate + NH4(+) + ATP = L-glutamine + ADP + phosphate + H(+). The polypeptide is Glutamine synthetase 2 cytoplasmic (Gs2) (Drosophila melanogaster (Fruit fly)).